Here is a 479-residue protein sequence, read N- to C-terminus: Proline--tRNA ligase (479 aa).

The protein belongs to the class-II aminoacyl-tRNA synthetase family. ProS type 3 subfamily. As to quaternary structure, homodimer.

It localises to the cytoplasm. It catalyses the reaction tRNA(Pro) + L-proline + ATP = L-prolyl-tRNA(Pro) + AMP + diphosphate. In terms of biological role, catalyzes the attachment of proline to tRNA(Pro) in a two-step reaction: proline is first activated by ATP to form Pro-AMP and then transferred to the acceptor end of tRNA(Pro). The sequence is that of Proline--tRNA ligase from Agathobacter rectalis (strain ATCC 33656 / DSM 3377 / JCM 17463 / KCTC 5835 / VPI 0990) (Eubacterium rectale).